Reading from the N-terminus, the 410-residue chain is Translation initiation factor 2 subunit gamma (410 aa).

The tr-type G domain occupies 6-203 (QSEVNIGMVG…AIQEFIPTPK (198 aa)). The G1 stretch occupies residues 15-22 (GHVDHGKT). Asp18, Thr22, Gly43, and Ser45 together coordinate Mg(2+). 18–23 (DHGKTS) contributes to the GTP binding site. The G2 stretch occupies residues 43 to 47 (GISIR). Residues Cys58, Cys61, Cys73, and Cys76 each coordinate Zn(2+). The tract at residues 90–93 (DAPG) is G3. GTP is bound by residues 146–149 (NKID) and 181–183 (SAH). The G4 stretch occupies residues 146-149 (NKID). The interval 181–183 (SAH) is G5.

The protein belongs to the TRAFAC class translation factor GTPase superfamily. Classic translation factor GTPase family. EIF2G subfamily. In terms of assembly, heterotrimer composed of an alpha, a beta and a gamma chain. Mg(2+) serves as cofactor.

The catalysed reaction is GTP + H2O = GDP + phosphate + H(+). Functionally, eIF-2 functions in the early steps of protein synthesis by forming a ternary complex with GTP and initiator tRNA. This chain is Translation initiation factor 2 subunit gamma, found in Methanococcus vannielii (strain ATCC 35089 / DSM 1224 / JCM 13029 / OCM 148 / SB).